The sequence spans 303 residues: Acetyl-coenzyme A carboxylase carboxyl transferase subunit beta (303 aa).

The 270-residue stretch at 25–294 (LWIKCPETGE…NDVSAKSLNG (270 aa)) folds into the CoA carboxyltransferase N-terminal domain.

It belongs to the AccD/PCCB family. As to quaternary structure, acetyl-CoA carboxylase is a heterohexamer composed of biotin carboxyl carrier protein (AccB), biotin carboxylase (AccC) and two subunits each of ACCase subunit alpha (AccA) and ACCase subunit beta (AccD).

Its subcellular location is the cytoplasm. The enzyme catalyses N(6)-carboxybiotinyl-L-lysyl-[protein] + acetyl-CoA = N(6)-biotinyl-L-lysyl-[protein] + malonyl-CoA. It participates in lipid metabolism; malonyl-CoA biosynthesis; malonyl-CoA from acetyl-CoA: step 1/1. In terms of biological role, component of the acetyl coenzyme A carboxylase (ACC) complex. Biotin carboxylase (BC) catalyzes the carboxylation of biotin on its carrier protein (BCCP) and then the CO(2) group is transferred by the transcarboxylase to acetyl-CoA to form malonyl-CoA. The chain is Acetyl-coenzyme A carboxylase carboxyl transferase subunit beta from Rhizobium rhizogenes (strain K84 / ATCC BAA-868) (Agrobacterium radiobacter).